A 463-amino-acid chain; its full sequence is A-type ATP synthase subunit B (463 aa).

This sequence belongs to the ATPase alpha/beta chains family. As to quaternary structure, has multiple subunits with at least A(3), B(3), C, D, E, F, H, I and proteolipid K(x).

The protein resides in the cell membrane. Component of the A-type ATP synthase that produces ATP from ADP in the presence of a proton gradient across the membrane. The B chain is a regulatory subunit. This chain is A-type ATP synthase subunit B, found in Saccharolobus islandicus (strain Y.N.15.51 / Yellowstone #2) (Sulfolobus islandicus).